A 493-amino-acid polypeptide reads, in one-letter code: NADH-ubiquinone oxidoreductase 51 kDa subunit, mitochondrial (493 aa).

The transit peptide at 1–27 (MLSRTAAPTKASARTLSRAAAEQCRTF) directs the protein to the mitochondrion. 96–105 (GRGGAGFPSG) contributes to the NAD(+) binding site. 212–259 (GAGAYVCGEETSLIESLEGKPGKPRLKPPFPAAVGLFGCPSTVANVET) provides a ligand contact to FMN. The [4Fe-4S] cluster site is built by cysteine 391, cysteine 394, cysteine 397, and cysteine 437.

Belongs to the complex I 51 kDa subunit family. As to quaternary structure, complex I is composed of about 40 different subunits. This is a component of the flavoprotein-sulfur (FP) fragment of the enzyme. Requires FMN as cofactor. It depends on [4Fe-4S] cluster as a cofactor.

Its subcellular location is the mitochondrion inner membrane. It carries out the reaction a ubiquinone + NADH + 5 H(+)(in) = a ubiquinol + NAD(+) + 4 H(+)(out). Its function is as follows. Core subunit of the mitochondrial membrane respiratory chain NADH dehydrogenase (Complex I) that is believed to belong to the minimal assembly required for catalysis. Complex I functions in the transfer of electrons from NADH to the respiratory chain. The immediate electron acceptor for the enzyme is believed to be ubiquinone. The polypeptide is NADH-ubiquinone oxidoreductase 51 kDa subunit, mitochondrial (nuo-51) (Neurospora crassa (strain ATCC 24698 / 74-OR23-1A / CBS 708.71 / DSM 1257 / FGSC 987)).